Here is a 222-residue protein sequence, read N- to C-terminus: 4'-phosphopantetheinyl transferase Npt (222 aa).

Asp-105, Glu-107, and Glu-147 together coordinate Mg(2+).

The protein belongs to the P-Pant transferase superfamily. Monomer. Mg(2+) is required as a cofactor.

The enzyme catalyses apo-[ACP] + CoA = holo-[ACP] + adenosine 3',5'-bisphosphate + H(+). Catalyzes the transfer of the 4'-phosphopantetheine moiety from coenzyme A to a serine residue in the acyl-carrier domain of carboxylic acid reductase Car, thus converting apo-Car to fully active holo-Car. Is probably also responsible for the activation of other proteins with phosphopantetheine attachment sites. The polypeptide is 4'-phosphopantetheinyl transferase Npt (npt) (Nocardia iowensis).